Reading from the N-terminus, the 200-residue chain is Outer-membrane lipoprotein LolB (200 aa).

The N-terminal stretch at 1-18 (MRRGRLLIAGLAALVLSA) is a signal peptide. Residue C19 is the site of N-palmitoyl cysteine attachment. The S-diacylglycerol cysteine moiety is linked to residue C19.

Belongs to the LolB family. In terms of assembly, monomer.

The protein localises to the cell outer membrane. Plays a critical role in the incorporation of lipoproteins in the outer membrane after they are released by the LolA protein. This Alkalilimnicola ehrlichii (strain ATCC BAA-1101 / DSM 17681 / MLHE-1) protein is Outer-membrane lipoprotein LolB.